We begin with the raw amino-acid sequence, 681 residues long: Threonine--tRNA ligase (681 aa).

One can recognise a TGS domain in the interval 3-97 (KQIQVTLPDG…EEDVQLALLT (95 aa)). Residues 279-576 (DHRVLGKQLD…LIEHYAGAFP (298 aa)) form a catalytic region. Zn(2+)-binding residues include Cys-372, His-423, and His-553.

This sequence belongs to the class-II aminoacyl-tRNA synthetase family. As to quaternary structure, homodimer. Zn(2+) serves as cofactor.

The protein localises to the cytoplasm. The enzyme catalyses tRNA(Thr) + L-threonine + ATP = L-threonyl-tRNA(Thr) + AMP + diphosphate + H(+). In terms of biological role, catalyzes the attachment of threonine to tRNA(Thr) in a two-step reaction: L-threonine is first activated by ATP to form Thr-AMP and then transferred to the acceptor end of tRNA(Thr). Also edits incorrectly charged L-seryl-tRNA(Thr). The chain is Threonine--tRNA ligase from Acidobacterium capsulatum (strain ATCC 51196 / DSM 11244 / BCRC 80197 / JCM 7670 / NBRC 15755 / NCIMB 13165 / 161).